Here is a 353-residue protein sequence, read N- to C-terminus: D-alanine--D-alanine ligase (353 aa).

Residues 141–349 (KAAFAAAGLS…LPQLVAELVD (209 aa)) form the ATP-grasp domain. 176 to 231 (EQELGYPCFVKPANLGSSVGITKANNRDELLAGLHQAAALDPRLLVEQGVNARELE) is an ATP binding site. Mg(2+)-binding residues include Asp302, Glu316, and Asn318.

It belongs to the D-alanine--D-alanine ligase family. The cofactor is Mg(2+). Requires Mn(2+) as cofactor.

The protein localises to the cytoplasm. It carries out the reaction 2 D-alanine + ATP = D-alanyl-D-alanine + ADP + phosphate + H(+). Its pathway is cell wall biogenesis; peptidoglycan biosynthesis. In terms of biological role, cell wall formation. This Synechococcus sp. (strain WH7803) protein is D-alanine--D-alanine ligase.